The following is a 76-amino-acid chain: Sea anemone sodium channel inhibitor type I (76 aa).

The first 19 residues, 1-19 (MNRMLIIFVVVTVFGLASG), serve as a signal peptide directing secretion. A propeptide spanning residues 20-30 (LGPNMPAPDLA) is cleaved from the precursor. 3 disulfides stabilise this stretch: Cys-37–Cys-72, Cys-39–Cys-60, and Cys-53–Cys-73.

The protein belongs to the sea anemone sodium channel inhibitory toxin family. Type I subfamily. In terms of tissue distribution, expressed in acontia, a specialised envenomation structure laden with batteries of venom-containing nematocysts found only in the superfamily Metridioidea.

The protein localises to the secreted. It is found in the nematocyst. In terms of biological role, may affect sodium channels (Nav). This Calliactis polypus (Hermit crab anemone) protein is Sea anemone sodium channel inhibitor type I.